Consider the following 370-residue polypeptide: Apolipoprotein A-V (370 aa).

A signal peptide spans 1–21 (MASMIALLTWALALLPALASA). Residue Ser-59 is modified to Phosphoserine.

It belongs to the apolipoprotein A1/A4/E family. Interacts with GPIHBP1. Interacts with SORL1; this interaction leads to APOA5 internalization and sorting either to lysosomes and degradation, or to the trans-Golgi network.

It localises to the secreted. The protein resides in the early endosome. It is found in the late endosome. Its subcellular location is the golgi apparatus. The protein localises to the trans-Golgi network. Functionally, minor apolipoprotein mainly associated with HDL and to a lesser extent with VLDL. May also be associated with chylomicrons. Important determinant of plasma triglyceride (TG) levels by both being a potent stimulator of apo-CII lipoprotein lipase (LPL) TG hydrolysis and an inhibitor of the hepatic VLDL-TG production rate (without affecting the VLDL-apoB production rate). Activates poorly lecithin:cholesterol acyltransferase (LCAT) and does not enhance efflux of cholesterol from macrophages. Binds heparin. The protein is Apolipoprotein A-V (APOA5) of Acinonyx jubatus (Cheetah).